Reading from the N-terminus, the 269-residue chain is Bis(5'-nucleosyl)-tetraphosphatase, symmetrical (269 aa).

This sequence belongs to the Ap4A hydrolase family.

The catalysed reaction is P(1),P(4)-bis(5'-adenosyl) tetraphosphate + H2O = 2 ADP + 2 H(+). In terms of biological role, hydrolyzes diadenosine 5',5'''-P1,P4-tetraphosphate to yield ADP. This is Bis(5'-nucleosyl)-tetraphosphatase, symmetrical from Vibrio vulnificus (strain CMCP6).